The primary structure comprises 592 residues: A-type ATP synthase subunit A (592 aa).

233 to 240 (GPFGSGKT) is a binding site for ATP.

This sequence belongs to the ATPase alpha/beta chains family. Has multiple subunits with at least A(3), B(3), C, D, E, F, H, I and proteolipid K(x).

Its subcellular location is the cell membrane. The catalysed reaction is ATP + H2O + 4 H(+)(in) = ADP + phosphate + 5 H(+)(out). Component of the A-type ATP synthase that produces ATP from ADP in the presence of a proton gradient across the membrane. The A chain is the catalytic subunit. This Saccharolobus islandicus (strain Y.G.57.14 / Yellowstone #1) (Sulfolobus islandicus) protein is A-type ATP synthase subunit A.